A 556-amino-acid chain; its full sequence is Arginine--tRNA ligase 1 (556 aa).

The 'HIGH' region motif lies at 132–142; sequence ANPTGDLHLGH.

This sequence belongs to the class-I aminoacyl-tRNA synthetase family. In terms of assembly, monomer.

It localises to the cytoplasm. It catalyses the reaction tRNA(Arg) + L-arginine + ATP = L-arginyl-tRNA(Arg) + AMP + diphosphate. In Bacillus anthracis, this protein is Arginine--tRNA ligase 1.